The primary structure comprises 1009 residues: Ulvan lyase, long isoform (1009 aa).

A signal peptide spans 1–32 (MTAQKSKYFNRIMTMNTLLFSLLTVGFSQAYA). 137–138 (SH) serves as a coordination point for substrate. Histidine 138 serves as the catalytic Proton donor/acceptor. Residues aspartate 200, aspartate 210, and lysine 212 each contribute to the Ca(2+) site. Substrate-binding residues include tyrosine 291 and arginine 308. Residues aspartate 311, aspartate 314, and tyrosine 316 each coordinate Ca(2+). Tyrosine 372 contributes to the substrate binding site.

It belongs to the polysaccharide lyase 24 family.

Its function is as follows. Ulvan lyase involved in ulvan degradation. Ulvan is the main polysaccharide component of the Ulvales (green seaweed) cell wall. It is composed of disaccharide building blocks comprising 3-sulfated rhamnose (Rha3S) linked to D-glucuronic acid (GlcA), L-iduronic acid (IduA), or D-xylose (Xyl). Ulvan lyase catalyzes preferentially the endolytic cleavage of the glycosidic bond between Rha3S and the uronic acid GlcA, but not IduA, producing oligosaccharides that have unsaturated 4-deoxy-L-threo-hex-4-enopyranosiduronic acid (deltaUA) at the non-reducing end. The most abundant end products in the degradation of the ulvan polysaccharide were deltaUA-Rha3S disaccharides and deltaUA-Rha3S-IduA-Rha3S and deltaUA-Rha3S-Xyl-Rha3S tetrasaccharides. The protein is Ulvan lyase, long isoform (ullA) of Glaciecola sp. (strain KUL10).